The following is a 762-amino-acid chain: Mitochondrial intermediate peptidase (762 aa).

The N-terminal 28 residues, 1-28, are a transit peptide targeting the mitochondrion; sequence MQVRTLLTLGKKKVIGNRQCILSLYRKY. Residue H544 coordinates Zn(2+). Residue E545 is part of the active site. H548 and H551 together coordinate Zn(2+).

The protein belongs to the peptidase M3 family. The cofactor is Zn(2+).

The protein resides in the mitochondrion matrix. The enzyme catalyses Release of an N-terminal octapeptide as second stage of processing of some proteins imported into the mitochondrion.. Cleaves proteins, imported into the mitochondrion, to their mature size. While most mitochondrial precursor proteins are processed to the mature form in one step by mitochondrial processing peptidase (MPP), the sequential cleavage by MIP of an octapeptide after initial processing by MPP is a required step for a subgroup of nuclear-encoded precursor proteins destined for the matrix or the inner membrane. The polypeptide is Mitochondrial intermediate peptidase (oct1) (Schizosaccharomyces pombe (strain 972 / ATCC 24843) (Fission yeast)).